The following is a 142-amino-acid chain: Baculoviral IAP repeat-containing protein 5 (142 aa).

Residues 18 to 88 form a BIR repeat; it reads RISTFKNWPF…KHSSGCAFLS (71 aa). Ser-20 carries the post-translational modification Phosphoserine; by AURKC. Lys-23 is modified (N6-acetyllysine). Thr-34 is modified (phosphothreonine; by CDK1 and CDK15). Thr-48 is modified (phosphothreonine). Zn(2+)-binding residues include Cys-57, Cys-60, His-77, and Cys-84. N6-acetyllysine is present on residues Lys-90, Lys-110, Lys-112, and Lys-115. Position 117 is a phosphothreonine; by AURKB (Thr-117). N6-acetyllysine is present on Lys-129.

Belongs to the IAP family. As to quaternary structure, monomer or homodimer. Exists as a homodimer in the apo state and as a monomer in the CPC-bound state. The monomer protects cells against apoptosis more efficiently than the dimer. Only the dimeric form is capable of enhancing tubulin stability in cells. When phosphorylated, interacts with LAMTOR5/HBXIP; the resulting complex binds pro-CASP9, as well as active CASP9, but much less efficiently. Component of the chromosomal passenger complex (CPC) composed of at least BIRC5/survivin, CDCA8/borealin, INCENP, AURKB or AURKC; in the complex forms a triple-helix bundle-based subcomplex with INCENP and CDCA8. Interacts with JTB. Interacts (via BIR domain) with histone H3 phosphorylated at 'Thr-3' (H3pT3). Interacts with EVI5. Interacts with GTP-bound RAN in both the S and M phases of the cell cycle. Interacts with USP9X. Interacts with tubulin. Interacts with BIRC2/c-IAP1. The acetylated form at Lys-129 interacts with STAT3. The monomeric form deacetylated at Lys-129 interacts with XPO1/CRM1. The monomeric form interacts with XIAP/BIRC4. Both the dimeric and monomeric form can interact with DIABLO/SMAC. Interacts with BIRC6/bruce. Interacts with FBXL7; this interaction facilitates the polyubiquitination and subsequent proteasomal degradation of BIRC5 by the SCF(FBXL7) E3 ubiquitin-protein ligase complex. Ubiquitinated by the Cul9-RING ubiquitin-protein ligase complex, leading to its degradation. Ubiquitination is required for centrosomal targeting. Deubiquitinated by USP35 or USP38; leading to stabilization. In terms of processing, acetylation at Lys-129 results in its homodimerization, while deacetylation promotes the formation of monomers which heterodimerize with XPO1/CRM1 which facilitates its nuclear export. The acetylated form represses STAT3 transactivation. The dynamic equilibrium between its acetylation and deacetylation at Lys-129 determines its interaction with XPO1/CRM1, its subsequent subcellular localization, and its ability to inhibit STAT3 transactivation. Post-translationally, in vitro phosphorylation at Thr-117 by AURKB prevents interaction with INCENP and localization to mitotic chromosomes. Phosphorylation at Thr-48 by CK2 is critical for its mitotic and anti-apoptotic activities. Phosphorylation at Thr-34 by CDK15 is critical for its anti-apoptotic activity. Phosphorylation at Ser-20 by AURKC is critical for regulation of proper chromosome alignment and segregation, and possibly cytokinesis.

The protein resides in the cytoplasm. It is found in the nucleus. It localises to the chromosome. The protein localises to the centromere. Its subcellular location is the cytoskeleton. The protein resides in the spindle. It is found in the kinetochore. It localises to the midbody. Functionally, multitasking protein that has dual roles in promoting cell proliferation and preventing apoptosis. Component of a chromosome passage protein complex (CPC) which is essential for chromosome alignment and segregation during mitosis and cytokinesis. Acts as an important regulator of the localization of this complex; directs CPC movement to different locations from the inner centromere during prometaphase to midbody during cytokinesis and participates in the organization of the center spindle by associating with polymerized microtubules. Involved in the recruitment of CPC to centromeres during early mitosis via association with histone H3 phosphorylated at 'Thr-3' (H3pT3) during mitosis. The complex with RAN plays a role in mitotic spindle formation by serving as a physical scaffold to help deliver the RAN effector molecule TPX2 to microtubules. May counteract a default induction of apoptosis in G2/M phase. The acetylated form represses STAT3 transactivation of target gene promoters. May play a role in neoplasia. Inhibitor of CASP3 and CASP7. Essential for the maintenance of mitochondrial integrity and function. The polypeptide is Baculoviral IAP repeat-containing protein 5 (BIRC5) (Pongo abelii (Sumatran orangutan)).